We begin with the raw amino-acid sequence, 206 residues long: Protein GET1 (206 aa).

The Lumenal portion of the chain corresponds to 1-4 (MPSL). Residues 5–24 (LITVLFLNVIIYVVNTVGAA) form a helical membrane-spanning segment. The Cytoplasmic segment spans residues 25–110 (TVDGLLWLLY…TFDMTIKIAR (86 aa)). Positions 75–100 (AKLRRRHDKALEAYEAKNNELTQSKS) form a coiled coil. The helical transmembrane segment at 111 to 131 (WAATSGLMLFLQFWYSKTPIF) threads the bilayer. Topologically, residues 132 to 155 (TLPPGWIPWQVQWVLSFPRAPMGT) are lumenal. The helical transmembrane segment at 156–172 (VSIQIWGGACATVVALV) threads the bilayer. Over 173–206 (GDAMKASLAYVSKPKIDRIKLGATMEGKEGKKRQ) the chain is Cytoplasmic.

It belongs to the WRB/GET1 family. As to quaternary structure, interacts with GET3.

It localises to the endoplasmic reticulum membrane. In terms of biological role, required for the post-translational delivery of tail-anchored (TA) proteins to the endoplasmic reticulum. Acts as a membrane receptor for soluble GET3, which recognizes and selectively binds the transmembrane domain of TA proteins in the cytosol. The chain is Protein GET1 from Ajellomyces capsulatus (strain G186AR / H82 / ATCC MYA-2454 / RMSCC 2432) (Darling's disease fungus).